Reading from the N-terminus, the 498-residue chain is ATP synthase subunit beta, chloroplastic (498 aa).

Residue 172–179 (GGAGVGKT) participates in ATP binding.

This sequence belongs to the ATPase alpha/beta chains family. As to quaternary structure, F-type ATPases have 2 components, CF(1) - the catalytic core - and CF(0) - the membrane proton channel. CF(1) has five subunits: alpha(3), beta(3), gamma(1), delta(1), epsilon(1). CF(0) has four main subunits: a(1), b(1), b'(1) and c(9-12).

The protein localises to the plastid. Its subcellular location is the chloroplast thylakoid membrane. The enzyme catalyses ATP + H2O + 4 H(+)(in) = ADP + phosphate + 5 H(+)(out). Produces ATP from ADP in the presence of a proton gradient across the membrane. The catalytic sites are hosted primarily by the beta subunits. The polypeptide is ATP synthase subunit beta, chloroplastic (Schisandra sphenanthera (Southern magnolia vine)).